Here is a 132-residue protein sequence, read N- to C-terminus: Holo-[acyl-carrier-protein] synthase (132 aa).

Residues aspartate 8 and glutamate 62 each contribute to the Mg(2+) site.

This sequence belongs to the P-Pant transferase superfamily. AcpS family. Mg(2+) serves as cofactor.

Its subcellular location is the cytoplasm. The enzyme catalyses apo-[ACP] + CoA = holo-[ACP] + adenosine 3',5'-bisphosphate + H(+). In terms of biological role, transfers the 4'-phosphopantetheine moiety from coenzyme A to a Ser of acyl-carrier-protein. This is Holo-[acyl-carrier-protein] synthase from Polaromonas sp. (strain JS666 / ATCC BAA-500).